Here is a 2206-residue protein sequence, read N- to C-terminus: Genome polyprotein (2206 aa).

Glycine 2 is lipidated: N-myristoyl glycine; by host. Topologically, residues 2–1517 (GAQVSSQKVG…NINRAMTILQ (1516 aa)) are cytoplasmic. 2 amphipathic alpha-helix regions span residues 579 to 599 (GIEDLISEVAQGALTLSLPKQ) and 579 to 603 (GIEDLISEVAQGALTLSLPKQQDSL). Catalysis depends on for protease 2A activity residues histidine 898 and aspartate 916. Cysteine 933 and cysteine 935 together coordinate Zn(2+). Cysteine 987 (for protease 2A activity) is an active-site residue. Residues cysteine 993 and histidine 995 each contribute to the Zn(2+) site. The tract at residues 1125–1197 (GDSWLKKFTE…HQSCPSQEHQ (73 aa)) is membrane-binding. Positions 1125–1263 (GDSWLKKFTE…SPGTGKSVAT (139 aa)) are oligomerization. Residues 1146 to 1150 (SNKIS) form an RNA-binding region. Residues 1229–1385 (EHTINNYIQF…GEYSRDGKLN (157 aa)) enclose the SF3 helicase domain. Residue 1253–1260 (GSPGTGKS) coordinates ATP. Zn(2+)-binding residues include cysteine 1393, cysteine 1396, cysteine 1405, and cysteine 1410. Residues 1393–1410 (CKDCHQPANFKRCCPLVC) form a C4-type zinc finger. Residues 1437 to 1444 (ERNRRSNI) form an RNA-binding region. Residues 1448-1453 (MEALFQ) form an oligomerization region. An intramembrane segment occupies 1518 to 1533 (AVTTFAAVAGVVYVMY). The Cytoplasmic portion of the chain corresponds to 1534–2206 (KLFAGHQGAY…TLYRRWLDSF (673 aa)). At tyrosine 1543 the chain carries O-(5'-phospho-RNA)-tyrosine. One can recognise a Peptidase C3 domain in the interval 1563 to 1741 (GPGFDYAVAM…FAAALKRSYF (179 aa)). Residues histidine 1602, glutamate 1633, and cysteine 1709 each act as for protease 3C activity in the active site. Residues 1972-2087 (EKLFAFDYTG…SYPHEVDASL (116 aa)) enclose the RdRp catalytic domain. Residues aspartate 1978 and aspartate 2073 each coordinate Mg(2+).

Belongs to the picornaviruses polyprotein family. In terms of assembly, interacts with capsid protein VP1 and capsid protein VP3 to form heterotrimeric protomers. Interacts with capsid protein VP0, and capsid protein VP3 to form heterotrimeric protomers. Interacts with human PVR. Five protomers subsequently associate to form pentamers which serve as building blocks for the capsid. Interacts with capsid protein VP2, capsid protein VP3 and capsid protein VP4 following cleavage of capsid protein VP0. As to quaternary structure, interacts with capsid protein VP1 and capsid protein VP3 in the mature capsid. In terms of assembly, interacts with capsid protein VP0 and capsid protein VP1 to form heterotrimeric protomers. Five protomers subsequently associate to form pentamers which serve as building blocks for the capsid. Interacts with capsid protein VP4 in the mature capsid. Interacts with protein 2C; this interaction may be important for virion morphogenesis. Interacts with capsid protein VP1 and capsid protein VP3. As to quaternary structure, homodimer. In terms of assembly, homohexamer; forms a hexameric ring structure with 6-fold symmetry characteristic of AAA+ ATPases. Interacts (via N-terminus) with host RTN3 (via reticulon domain); this interaction is important for viral replication. Interacts with capsid protein VP3; this interaction may be important for virion morphogenesis. Interacts with protein 3CD. As to quaternary structure, homodimer. Interacts with host GBF1. Interacts (via GOLD domain) with host ACBD3 (via GOLD domain); this interaction allows the formation of a viral protein 3A/ACBD3 heterotetramer with a 2:2 stoichiometry, which will stimulate the recruitment of host PI4KB in order to synthesize PI4P at the viral RNA replication sites. In terms of assembly, interacts with RNA-directed RNA polymerase. Interacts with protein 3AB and with RNA-directed RNA polymerase. As to quaternary structure, interacts with Viral protein genome-linked and with protein 3CD. Mg(2+) is required as a cofactor. In terms of processing, specific enzymatic cleavages in vivo by the viral proteases yield processing intermediates and the mature proteins. Myristoylation is required for the formation of pentamers during virus assembly. Further assembly of 12 pentamers and a molecule of genomic RNA generates the provirion. Post-translationally, during virion maturation, immature virions are rendered infectious following cleavage of VP0 into VP4 and VP2. This maturation seems to be an autocatalytic event triggered by the presence of RNA in the capsid and it is followed by a conformational change infectious virion. In terms of processing, myristoylation is required during RNA encapsidation and formation of the mature virus particle. VPg is uridylylated by the polymerase into VPg-pUpU. This acts as a nucleotide-peptide primer for the genomic RNA replication.

It is found in the virion. The protein localises to the host cytoplasm. Its subcellular location is the host cytoplasmic vesicle membrane. The protein resides in the host nucleus. It catalyses the reaction a ribonucleoside 5'-triphosphate + H2O = a ribonucleoside 5'-diphosphate + phosphate + H(+). It carries out the reaction Selective cleavage of Tyr-|-Gly bond in the picornavirus polyprotein.. The enzyme catalyses RNA(n) + a ribonucleoside 5'-triphosphate = RNA(n+1) + diphosphate. The catalysed reaction is Selective cleavage of Gln-|-Gly bond in the poliovirus polyprotein. In other picornavirus reactions Glu may be substituted for Gln, and Ser or Thr for Gly.. Its activity is regulated as follows. Replication or transcription is subject to high level of random mutations by the nucleotide analog ribavirin. Its function is as follows. Forms an icosahedral capsid of pseudo T=3 symmetry with capsid proteins VP2 and VP3. The capsid is 300 Angstroms in diameter, composed of 60 copies of each capsid protein and enclosing the viral positive strand RNA genome. Capsid protein VP1 mainly forms the vertices of the capsid. Capsid protein VP1 interacts with host cell receptor PVR to provide virion attachment to target host cells. This attachment induces virion internalization predominantly through clathrin- and caveolin-independent endocytosis in Hela cells and through caveolin-mediated endocytosis in brain microvascular endothelial cells. Tyrosine kinases are probably involved in the entry process. Virus binding to PVR induces increased junctional permeability and rearrangement of junctional proteins. Modulation of endothelial tight junctions, as well as cytolytic infection of endothelial cells themselves, may result in loss of endothelial integrity which may help the virus to reach the CNS. After binding to its receptor, the capsid undergoes conformational changes. Capsid protein VP1 N-terminus (that contains an amphipathic alpha-helix) and capsid protein VP4 are externalized. Together, they shape a pore in the host membrane through which viral genome is translocated to host cell cytoplasm. Functionally, forms an icosahedral capsid of pseudo T=3 symmetry with capsid proteins VP2 and VP3. The capsid is 300 Angstroms in diameter, composed of 60 copies of each capsid protein and enclosing the viral positive strand RNA genome. Lies on the inner surface of the capsid shell. After binding to the host receptor, the capsid undergoes conformational changes. Capsid protein VP4 is released, Capsid protein VP1 N-terminus is externalized, and together, they shape a pore in the host membrane through which the viral genome is translocated into the host cell cytoplasm. In terms of biological role, component of immature procapsids, which is cleaved into capsid proteins VP4 and VP2 after maturation. Allows the capsid to remain inactive before the maturation step. Its function is as follows. Cysteine protease that cleaves viral polyprotein and specific host proteins. It is responsible for the autocatalytic cleavage between the P1 and P2 regions, which is the first cleavage occurring in the polyprotein. Also cleaves the host translation initiation factor EIF4G1, in order to shut down the capped cellular mRNA translation. Inhibits the host nucleus-cytoplasm protein and RNA trafficking by cleaving host members of the nuclear pores including NUP98, NUP62 and NUP153. Counteracts stress granule formation probably by antagonizing its assembly or promoting its dissassembly. Cleaves and inhibits host IFIH1/MDA5, thereby inhibiting the type-I IFN production and the establishment of the antiviral state. Cleaves and inhibits host MAVS, thereby inhibiting the type-I IFN production and the establishment of the antiviral state. Functionally, plays an essential role in the virus replication cycle by acting as a viroporin. Creates a pore in the host endoplasmic reticulum and as a consequence releases Ca2+ in the cytoplasm of infected cell. In turn, high levels of cytoplasmic calcium may trigger membrane trafficking and transport of viral ER-associated proteins to viroplasms, sites of viral genome replication. Induces and associates with structural rearrangements of intracellular membranes. Displays RNA-binding, nucleotide binding and NTPase activities. May play a role in virion morphogenesis and viral RNA encapsidation by interacting with the capsid protein VP3. In terms of biological role, localizes the viral replication complex to the surface of membranous vesicles. Together with protein 3CD binds the Cis-Active RNA Element (CRE) which is involved in RNA synthesis initiation. Acts as a cofactor to stimulate the activity of 3D polymerase, maybe through a nucleid acid chaperone activity. Its function is as follows. Localizes the viral replication complex to the surface of membranous vesicles. It inhibits host cell endoplasmic reticulum-to-Golgi apparatus transport and causes the disassembly of the Golgi complex, possibly through GBF1 interaction. This would result in depletion of MHC, trail receptors and IFN receptors at the host cell surface. Plays an essential role in viral RNA replication by recruiting ACBD3 and PI4KB at the viral replication sites, thereby allowing the formation of the rearranged membranous structures where viral replication takes place. Functionally, acts as a primer for viral RNA replication and remains covalently bound to viral genomic RNA. VPg is uridylylated prior to priming replication into VPg-pUpU. The oriI viral genomic sequence may act as a template for this. The VPg-pUpU is then used as primer on the genomic RNA poly(A) by the RNA-dependent RNA polymerase to replicate the viral genome. During genome replication, the VPg-RNA linkage is removed by the host TDP2, thereby accelerating replication. During the late stage of the replication cycle, host TDP2 is excluded from sites of viral RNA synthesis and encapsidation, allowing for the generation of progeny virions. Involved in the viral replication complex and viral polypeptide maturation. It exhibits protease activity with a specificity and catalytic efficiency that is different from protease 3C. Protein 3CD lacks polymerase activity. Protein 3CD binds to the 5'UTR of the viral genome. In terms of biological role, major viral protease that mediates proteolytic processing of the polyprotein. Cleaves host EIF5B, contributing to host translation shutoff. Also cleaves host PABPC1, contributing to host translation shutoff. Cleaves host RIGI and thus contributes to the inhibition of type I interferon production. Cleaves host NLRP1, triggers host N-glycine-mediated degradation of the autoinhibitory NLRP1 N-terminal fragment. Inhibits the integrated stress response (ISR) in the infected cell by cleaving host G3BP1. Stress granule formation is thus inhibited, which allows protein synthesis and viral replication. Its function is as follows. Replicates the viral genomic RNA on the surface of intracellular membranes. May form linear arrays of subunits that propagate along a strong head-to-tail interaction called interface-I. Covalently attaches UMP to a tyrosine of VPg, which is used to prime RNA synthesis. The positive stranded RNA genome is first replicated at virus induced membranous vesicles, creating a dsRNA genomic replication form. This dsRNA is then used as template to synthesize positive stranded RNA genomes. ss(+)RNA genomes are either translated, replicated or encapsidated. The polypeptide is Genome polyprotein (Poliovirus type 3 (strains P3/Leon/37 and P3/Leon 12A[1]B)).